Consider the following 173-residue polypeptide: Alpha-crystallin A chain (173 aa).

An N-acetylmethionine modification is found at Met1. The segment at 1–63 (MDIAIQHPWF…RTVLDSGISE (63 aa)) is required for complex formation with BFSP1 and BFSP2. At Gln6 the chain carries Deamidated glutamine; partial. The residue at position 45 (Ser45) is a Phosphoserine. Gln50 bears the Deamidated glutamine; partial mark. The sHSP domain maps to 52 to 162 (LFRTVLDSGI…GHSERAIPVS (111 aa)). Lys70 and Lys99 each carry N6-acetyllysine. His100 contacts Zn(2+). Asn101 bears the Deamidated asparagine; partial mark. Zn(2+) is bound by residues Glu102 and His107. Residue Ser122 is modified to Phosphoserine. Asn123 is subject to Deamidated asparagine; partial. The segment at 144 to 173 (PKVPSGVDAGHSERAIPVSREEKPSSAPSS) is disordered. Over residues 153 to 167 (GHSERAIPVSREEKP) the composition is skewed to basic and acidic residues. His154 is a binding site for Zn(2+). The O-linked (GlcNAc) serine glycan is linked to Ser162.

The protein belongs to the small heat shock protein (HSP20) family. Heteromer composed of three CRYAA and one CRYAB subunits. Inter-subunit bridging via zinc ions enhances stability, which is crucial as there is no protein turn over in the lens. Can also form homodimers and homotetramers (dimers of dimers) which serve as the building blocks of homooligomers. Within homooligomers, the zinc-binding motif is created from residues of 3 different molecules. His-100 and Glu-102 from one molecule are ligands of the zinc ion, and His-107 and His-154 residues from additional molecules complete the site with tetrahedral coordination geometry. Part of a complex required for lens intermediate filament formation composed of BFSP1, BFSP2 and CRYAA. Acetylation at Lys-70 may increase chaperone activity. Post-translationally, undergoes age-dependent proteolytical cleavage at the C-terminus.

It is found in the cytoplasm. It localises to the nucleus. In terms of biological role, contributes to the transparency and refractive index of the lens. Acts as a chaperone, preventing aggregation of various proteins under a wide range of stress conditions. Required for the correct formation of lens intermediate filaments as part of a complex composed of BFSP1, BFSP2 and CRYAA. This Canis lupus familiaris (Dog) protein is Alpha-crystallin A chain (CRYAA).